Reading from the N-terminus, the 882-residue chain is Ubiquitin carboxyl-terminal hydrolase 4 (882 aa).

Positions 182–308 (YDSSLLLIDV…WVSKKGACET (127 aa)) constitute a Rhodanese domain. Residues 382-399 (KAKSSSTSSVTSSSPAPS) show a composition bias toward low complexity. The disordered stretch occupies residues 382–411 (KAKSSSTSSVTSSSPAPSQLVRPQTSSMPP). Over residues 402–411 (VRPQTSSMPP) the composition is skewed to polar residues. A USP domain is found at 519-879 (VGLENMGNSC…NAYVLFYHRV (361 aa)). Cys-528 serves as the catalytic Nucleophile. Catalysis depends on His-836, which acts as the Proton acceptor.

Belongs to the peptidase C19 family.

It localises to the cytoplasm. It is found in the late endosome membrane. The enzyme catalyses Thiol-dependent hydrolysis of ester, thioester, amide, peptide and isopeptide bonds formed by the C-terminal Gly of ubiquitin (a 76-residue protein attached to proteins as an intracellular targeting signal).. Its activity is regulated as follows. RFU1 is an inhibitor of deubiquitination activity. Functionally, ubiquitin thioesterase that acts at the late endosome/prevacuolar compartment to recover ubiquitin from ubiquitinated membrane proteins en route to the vacuole. Also removes ubiquitin from soluble proteins targeted to proteasomes. Is essential to maintain a normal level of free ubiquitin. Required for promoting coordination of DNA replication and avoids DNA overreplication. This chain is Ubiquitin carboxyl-terminal hydrolase 4 (DOA4), found in Vanderwaltozyma polyspora (strain ATCC 22028 / DSM 70294 / BCRC 21397 / CBS 2163 / NBRC 10782 / NRRL Y-8283 / UCD 57-17) (Kluyveromyces polysporus).